The following is a 1228-amino-acid chain: DNA-directed RNA polymerase subunit beta (1228 aa).

Belongs to the RNA polymerase beta chain family. In terms of assembly, the RNAP catalytic core consists of 2 alpha, 1 beta, 1 beta' and 1 omega subunit. When a sigma factor is associated with the core the holoenzyme is formed, which can initiate transcription.

The catalysed reaction is RNA(n) + a ribonucleoside 5'-triphosphate = RNA(n+1) + diphosphate. In terms of biological role, DNA-dependent RNA polymerase catalyzes the transcription of DNA into RNA using the four ribonucleoside triphosphates as substrates. This is DNA-directed RNA polymerase subunit beta from Leptospira biflexa.